We begin with the raw amino-acid sequence, 461 residues long: Serine carboxypeptidase-like 51 (461 aa).

A signal peptide spans 1–20 (MKTTVVYLVILCLIVSCTNG). Residues Asn99 and Asn152 are each glycosylated (N-linked (GlcNAc...) asparagine). Ser166 is an active-site residue. An N-linked (GlcNAc...) asparagine glycan is attached at Asn340. Residues Asp379 and His438 contribute to the active site.

Belongs to the peptidase S10 family. As to expression, expressed in seedlings, roots, flowers and siliques.

It is found in the secreted. Functionally, probable carboxypeptidase. In Arabidopsis thaliana (Mouse-ear cress), this protein is Serine carboxypeptidase-like 51 (SCPL51).